Here is a 490-residue protein sequence, read N- to C-terminus: Delta(14)-sterol reductase (490 aa).

The next 7 membrane-spanning stretches (helical) occupy residues Phe-23–Phe-43, Val-80–Leu-100, Leu-136–Ile-156, Phe-160–Val-180, Glu-230–Ala-250, Leu-255–Phe-275, and Gln-324–Phe-344. Residues Lys-351, Arg-355, Ile-378, Trp-383, and Asn-390–Tyr-391 contribute to the NADP(+) site. Residues Ala-436–Ile-456 traverse the membrane as a helical segment. Residues Asp-462, Cys-466–Tyr-470, and Tyr-477 each bind NADP(+).

The protein belongs to the ERG4/ERG24 family.

The protein localises to the membrane. It carries out the reaction 4,4-dimethyl-5alpha-cholesta-8,24-dien-3beta-ol + NADP(+) = 4,4-dimethyl-5alpha-cholesta-8,14,24-trien-3beta-ol + NADPH + H(+). It participates in steroid biosynthesis; zymosterol biosynthesis; zymosterol from lanosterol: step 2/6. In terms of biological role, reduces the C14=C15 double bond of 4,4-dimethyl-cholesta-8,14,24-trienol to produce 4,4-dimethyl-cholesta-8,24-dienol. In Neurospora crassa (strain ATCC 24698 / 74-OR23-1A / CBS 708.71 / DSM 1257 / FGSC 987), this protein is Delta(14)-sterol reductase (erg-3).